A 423-amino-acid polypeptide reads, in one-letter code: Glucuronoxylanase XynC (423 aa).

A signal peptide spans 1-33 (MMSSVKKTICVLLVCFTMMSVMLLGPGVTEVSA). Glu-172 acts as the Proton donor in catalysis. The active-site Nucleophile is Glu-261.

This sequence belongs to the glycosyl hydrolase 30 family.

The protein localises to the secreted. The catalysed reaction is Endohydrolysis of (1-&gt;4)-beta-D-xylosyl links in some glucuronoarabinoxylans.. The protein operates within glycan degradation; xylan degradation. Catalyzes the depolymerization of methylglucuronoxylan (MeGAXn). It cleaves the beta-1,4-xylosidic bond penultimate to that linking carbon one of the xylose residue substituted with alpha-1,2-linked 4-O-methyl-D-glucuronate (MeGA). The sequence is that of Glucuronoxylanase XynC (xynC) from Bacillus subtilis.